We begin with the raw amino-acid sequence, 241 residues long: Large ribosomal subunit protein uL3 (241 aa).

Disordered regions lie at residues 139–166 (VSHR…PGHM) and 209–241 (KKPL…KEGA). At Gln151 the chain carries N5-methylglutamine.

This sequence belongs to the universal ribosomal protein uL3 family. Part of the 50S ribosomal subunit. Forms a cluster with proteins L14 and L19. Methylated by PrmB.

Functionally, one of the primary rRNA binding proteins, it binds directly near the 3'-end of the 23S rRNA, where it nucleates assembly of the 50S subunit. This chain is Large ribosomal subunit protein uL3, found in Nitrobacter hamburgensis (strain DSM 10229 / NCIMB 13809 / X14).